Consider the following 1257-residue polypeptide: Neurocan core protein (1257 aa).

The N-terminal stretch at 1–22 is a signal peptide; that stretch reads MGAESVWASGLLVLWLLLLVSG. Residues 37–157 form the Ig-like V-type domain; it reads HMLKSGSGPI…EQDLVTLEVT (121 aa). Intrachain disulfides connect Cys-58-Cys-139, Cys-181-Cys-252, Cys-205-Cys-226, Cys-279-Cys-354, and Cys-303-Cys-324. Asn-121 carries an N-linked (GlcNAc...) asparagine glycan. 2 Link domains span residues 159–254 and 258–356; these read VVFH…YCFA and GGEV…YCFR. A glycan (N-linked (GlcNAc...) asparagine) is linked at Asn-339. Positions 361-391 are disordered; that stretch reads TPQRGDSEIPSSGDEGEIVSAEGPPAPELKP. 2 O-linked (Xyl...) (chondroitin sulfate) serine glycosylation sites follow: Ser-380 and Ser-410. The span at 447–459 shows a compositional bias: low complexity; sequence SSTGVPSPSSLGV. Disordered regions lie at residues 447 to 493, 550 to 610, and 683 to 707; these read SSTG…FQQQ, GSLG…AVPS, and GAED…GSPE. The segment covering 464–473 has biased composition (polar residues); sequence TTPSGTQVAP. Residues 569–580 are compositionally biased toward low complexity; the sequence is SPSTVPSTDSTP. Asn-737 carries N-linked (GlcNAc...) asparagine glycosylation. O-linked (Xyl...) (chondroitin sulfate) serine glycosylation is present at Ser-944. The EGF-like 1 domain occupies 949–985; that stretch reads PTDPCENNPCLHGGTCRTNGTMYGCSCDQGYAGENCE. 11 disulfide bridges follow: Cys-953–Cys-964, Cys-958–Cys-973, Cys-975–Cys-984, Cys-991–Cys-1002, Cys-996–Cys-1011, Cys-1013–Cys-1022, Cys-1029–Cys-1040, Cys-1057–Cys-1149, Cys-1125–Cys-1141, Cys-1156–Cys-1199, and Cys-1185–Cys-1212. N-linked (GlcNAc...) asparagine glycosylation occurs at Asn-967. One can recognise an EGF-like 2; calcium-binding domain in the interval 987 to 1023; sequence DIDDCLCSPCENGGTCIDEVNGFICLCLPSYGGNLCE. The region spanning 1025–1154 is the C-type lectin domain; sequence DTEGCDRGWH…LPYVCKKGTV (130 aa). The 61-residue stretch at 1154 to 1214 folds into the Sushi domain; sequence VLCGPPPAVE…WDRPQIVCTK (61 aa). Residue Asn-1164 is glycosylated (N-linked (GlcNAc...) asparagine). Over residues 1215–1244 the composition is skewed to basic residues; the sequence is PRRSHRMRRHHHHPHRHHKPRKEHRKHKRH. The disordered stretch occupies residues 1215–1257; the sequence is PRRSHRMRRHHHHPHRHHKPRKEHRKHKRHPAEDWEKDEGDFC.

It belongs to the aggrecan/versican proteoglycan family. In terms of processing, two isoforms were found that probably arise by proteolytic processing. The large isoform is predominant in early postnatal brain, the small isoform is found in adult brain. O-glycosylated; contains chondroitin sulfate. As to expression, early postnatal and adult brain; not expressed in kidney, lung, liver and muscle.

The protein resides in the secreted. Its function is as follows. May modulate neuronal adhesion and neurite growth during development by binding to neural cell adhesion molecules (NG-CAM and N-CAM). Chondroitin sulfate proteoglycan; binds to hyaluronic acid. This Rattus norvegicus (Rat) protein is Neurocan core protein (Ncan).